We begin with the raw amino-acid sequence, 160 residues long: uncharacterized protein (160 aa).

Residues 47–67 traverse the membrane as a helical segment; that stretch reads LLGGFANVAAILTPLVAVLAY.

It is found in the membrane. This is an uncharacterized protein from Sinorhizobium fredii (strain NBRC 101917 / NGR234).